Here is a 425-residue protein sequence, read N- to C-terminus: Putative chloroquine resistance transporter (425 aa).

At 1-56 (MTGIKKGKNKKKNMKNDDRYKELDSLITNGSEIGNNSGRSCVKRFFKIIGNEMKNN) the chain is on the cytoplasmic side. The chain crosses the membrane as a helical span at residues 57-77 (VYVYLLSILYLCVCVMNKVFA). Residues 78–88 (KRTLNKMGNYS) lie on the Vacuolar side of the membrane. Residue Asn-86 is glycosylated (N-linked (GlcNAc...) asparagine). The chain crosses the membrane as a helical span at residues 89-109 (FVTSETHNIICIIVFQLLYFI). Topologically, residues 110-126 (YRKTSSSSVYKNESQKN) are cytoplasmic. A helical membrane pass occupies residues 127–147 (FGWQFFLISLLDASTVIISMI). At 148–157 (GLTRTTGNIQ) the chain is on the vacuolar side. Residues 158-178 (SFIMQLIIPVNMYFWFMFLGY) form a helical membrane-spanning segment. Residues 179–181 (RYH) lie on the Cytoplasmic side of the membrane. The helical transmembrane segment at 182 to 202 (LFNYLGAFIILITIAVVETFL) threads the bilayer. The Vacuolar segment spans residues 203–210 (SFETQGEN). A helical membrane pass occupies residues 211 to 231 (SIIFNLIMISAFNTLSFSNMT). Residues 232–249 (REVVFKKHKINILRLNAM) lie on the Cytoplasmic side of the membrane. A helical transmembrane segment spans residues 250–270 (VVLFQFFTSLLVLPVYNIPFL). Residues 271–318 (KEIYMPFSEMSTNINNGLRCLFYGENTIVENCGVGMVKMCDNCEGAWK) are Vacuolar-facing. 2 disulfide bridges follow: Cys-290–Cys-313 and Cys-302–Cys-310. The helical transmembrane segment at 319 to 339 (TFITFSFFNICDNLLACYIID) threads the bilayer. Residues 340–347 (KFSTMTYT) are Cytoplasmic-facing. Residues 348–368 (IVSCIQGPAITIAYYFKFLAG) form a helical membrane-spanning segment. Topologically, residues 369–378 (DAVRKPRILD) are vacuolar. A helical membrane pass occupies residues 379–399 (FLTLFGYLFGTIIYRIGNIIL). The Cytoplasmic segment spans residues 400–425 (EKKQVIKSQNSNDSEAELTSIETSRA).

Belongs to the CRT-like transporter family.

The protein localises to the vacuole membrane. Its function is as follows. Nutrient transporter. Involved in maintaining the osmotic homeostasis of the digestive vacuole. The sequence is that of Putative chloroquine resistance transporter from Plasmodium berghei.